We begin with the raw amino-acid sequence, 256 residues long: Tryptophan synthase alpha chain (256 aa).

Residues glutamate 45 and aspartate 56 each act as proton acceptor in the active site.

The protein belongs to the TrpA family. Tetramer of two alpha and two beta chains.

The enzyme catalyses (1S,2R)-1-C-(indol-3-yl)glycerol 3-phosphate + L-serine = D-glyceraldehyde 3-phosphate + L-tryptophan + H2O. The protein operates within amino-acid biosynthesis; L-tryptophan biosynthesis; L-tryptophan from chorismate: step 5/5. Its function is as follows. The alpha subunit is responsible for the aldol cleavage of indoleglycerol phosphate to indole and glyceraldehyde 3-phosphate. This is Tryptophan synthase alpha chain from Christiangramia forsetii (strain DSM 17595 / CGMCC 1.15422 / KT0803) (Gramella forsetii).